The sequence spans 434 residues: Aspartate--tRNA(Asp/Asn) ligase (434 aa).

Glu167 serves as a coordination point for L-aspartate. An aspartate region spans residues 189–192 (QLFK). Position 211 (Arg211) interacts with L-aspartate. ATP-binding positions include 211-213 (RAE), 219-221 (RHL), and Glu357. Residues Glu357 and Ser360 each coordinate Mg(2+). Residues Ser360 and Arg364 each contribute to the L-aspartate site. Position 405–408 (405–408 (GGER)) interacts with ATP.

It belongs to the class-II aminoacyl-tRNA synthetase family. Type 2 subfamily. As to quaternary structure, homodimer. Requires Mg(2+) as cofactor.

The protein localises to the cytoplasm. The catalysed reaction is tRNA(Asx) + L-aspartate + ATP = L-aspartyl-tRNA(Asx) + AMP + diphosphate. Aspartyl-tRNA synthetase with relaxed tRNA specificity since it is able to aspartylate not only its cognate tRNA(Asp) but also tRNA(Asn). Reaction proceeds in two steps: L-aspartate is first activated by ATP to form Asp-AMP and then transferred to the acceptor end of tRNA(Asp/Asn). In Haloquadratum walsbyi (strain DSM 16790 / HBSQ001), this protein is Aspartate--tRNA(Asp/Asn) ligase.